Here is a 259-residue protein sequence, read N- to C-terminus: MRFLILFLTLSLGGIDAAPPVQSRILGGFKCEKNSQPWQVAVYYLDEYLCGGVLLDRNWVLTAAHCYEDKYNIWLGKNKLFQDEPSAQHRLVSKSFPHPDFNMSLLQSVPTGADLSNDLMLLRLSKPADITDVVKPIDLPTTEPKLGSTCLASGWGSINQLIYQNPNDLQCVSIKLHPNEVCVKAHILKVTDVMLCAGEMNGGKDTCKGDSGGPLICDGVLQGITSWGSTPCGEPNAPAIYTKLIKFTSWIKDTMAKNP.

An N-terminal signal peptide occupies residues 1-17 (MRFLILFLTLSLGGIDA). The propeptide at 18 to 24 (APPVQSR) is activation peptide. The Peptidase S1 domain maps to 25–256 (ILGGFKCEKN…FTSWIKDTMA (232 aa)). Intrachain disulfides connect Cys31-Cys171, Cys50-Cys66, Cys150-Cys217, Cys182-Cys196, and Cys207-Cys232. Catalysis depends on His65, which acts as the Charge relay system. An N-linked (GlcNAc...) asparagine glycan is attached at Asn102. Asp118 functions as the Charge relay system in the catalytic mechanism. The active-site Charge relay system is Ser211.

It belongs to the peptidase S1 family. Kallikrein subfamily.

It catalyses the reaction Preferential cleavage of Arg-|-Xaa bonds in small molecule substrates. Highly selective action to release kallidin (lysyl-bradykinin) from kininogen involves hydrolysis of Met-|-Xaa or Leu-|-Xaa.. In terms of biological role, glandular kallikreins cleave Met-Lys and Arg-Ser bonds in kininogen to release Lys-bradykinin. This is Kallikrein 1-related peptidase b22 (Klk1b22) from Mus musculus (Mouse).